The chain runs to 629 residues: tRNA uridine 5-carboxymethylaminomethyl modification enzyme MnmG (629 aa).

Residue 14–19 (GAGHAG) participates in FAD binding. 274–288 (GPRYCPSIEDKVVRF) contributes to the NAD(+) binding site.

The protein belongs to the MnmG family. In terms of assembly, homodimer. Heterotetramer of two MnmE and two MnmG subunits. The cofactor is FAD.

The protein localises to the cytoplasm. Functionally, NAD-binding protein involved in the addition of a carboxymethylaminomethyl (cmnm) group at the wobble position (U34) of certain tRNAs, forming tRNA-cmnm(5)s(2)U34. The protein is tRNA uridine 5-carboxymethylaminomethyl modification enzyme MnmG of Xylella fastidiosa (strain 9a5c).